Reading from the N-terminus, the 759-residue chain is Xaa-Pro dipeptidyl-peptidase (759 aa).

Residues Ser347, Asp467, and His497 each act as charge relay system in the active site.

It belongs to the peptidase S15 family. As to quaternary structure, homodimer.

The protein resides in the secreted. The catalysed reaction is Hydrolyzes Xaa-Pro-|- bonds to release unblocked, N-terminal dipeptides from substrates including Ala-Pro-|-p-nitroanilide and (sequentially) Tyr-Pro-|-Phe-Pro-|-Gly-Pro-|-Ile.. In terms of biological role, removes N-terminal dipeptides sequentially from polypeptides having unsubstituted N-termini provided that the penultimate residue is proline. The chain is Xaa-Pro dipeptidyl-peptidase (pepX) from Streptococcus gordonii.